The chain runs to 338 residues: 1-aminocyclopropane-1-carboxylate deaminase (338 aa).

Position 51 is an N6-(pyridoxal phosphate)lysine (lysine 51). The Nucleophile role is filled by serine 78.

The protein belongs to the ACC deaminase/D-cysteine desulfhydrase family. In terms of assembly, homotrimer. It depends on pyridoxal 5'-phosphate as a cofactor.

It catalyses the reaction 1-aminocyclopropane-1-carboxylate + H2O = 2-oxobutanoate + NH4(+). Its function is as follows. Catalyzes a cyclopropane ring-opening reaction, the irreversible conversion of 1-aminocyclopropane-1-carboxylate (ACC) to ammonia and alpha-ketobutyrate. Allows growth on ACC as a nitrogen source. In Burkholderia thailandensis (strain ATCC 700388 / DSM 13276 / CCUG 48851 / CIP 106301 / E264), this protein is 1-aminocyclopropane-1-carboxylate deaminase.